Here is a 254-residue protein sequence, read N- to C-terminus: Receptor expression-enhancing protein 3 (254 aa).

The next 3 helical transmembrane spans lie at 1–21 (MVSW…YPAY), 35–55 (YVRW…ETVA), and 59–79 (LAWF…LLSP). The segment at 162–232 (DEPVGHRPYQ…QSMKSVKTIK (71 aa)) is disordered. Positions 198 to 212 (EQTDEEAEGPFSDDE) are enriched in acidic residues. Thr-200 bears the Phosphothreonine mark. Ser-209 is modified (phosphoserine).

Belongs to the DP1 family.

The protein localises to the endoplasmic reticulum membrane. Microtubule-binding protein required to ensure proper cell division and nuclear envelope reassembly by sequestering the endoplasmic reticulum away from chromosomes during mitosis. Probably acts by clearing the endoplasmic reticulum membrane from metaphase chromosomes. This chain is Receptor expression-enhancing protein 3 (Reep3), found in Mus musculus (Mouse).